The chain runs to 417 residues: Glutamate-1-semialdehyde 2,1-aminomutase (417 aa).

The residue at position 267 (K267) is an N6-(pyridoxal phosphate)lysine.

It belongs to the class-III pyridoxal-phosphate-dependent aminotransferase family. HemL subfamily. Homodimer. Pyridoxal 5'-phosphate serves as cofactor.

It localises to the cytoplasm. It carries out the reaction (S)-4-amino-5-oxopentanoate = 5-aminolevulinate. The protein operates within porphyrin-containing compound metabolism; protoporphyrin-IX biosynthesis; 5-aminolevulinate from L-glutamyl-tRNA(Glu): step 2/2. This chain is Glutamate-1-semialdehyde 2,1-aminomutase, found in Solibacter usitatus (strain Ellin6076).